Consider the following 240-residue polypeptide: Homeobox protein DLX-4 (240 aa).

Disordered stretches follow at residues 44 to 70 (DLSY…DSYL) and 175 to 194 (LKQS…PSLS). Residues 116–175 (LRKPRTIYSSLQLQHLNQRFQHTQYLALPERAQLAAQLGLTQTQVKIWFQNKRSKYKKLL) constitute a DNA-binding region (homeobox).

This sequence belongs to the distal-less homeobox family. In terms of tissue distribution, branchial arches, molar and incisor teeth and limbs.

The protein resides in the nucleus. May play a role in determining the production of hemoglobin S. May act as a repressor. During embryonic development, plays a role in palatogenesis. In Mus musculus (Mouse), this protein is Homeobox protein DLX-4 (Dlx4).